Consider the following 284-residue polypeptide: Hemin import ATP-binding protein HmuV (284 aa).

The region spanning 33–266 (LGARHLSKSY…KLLSDVYSYE (234 aa)) is the ABC transporter domain. 65-72 (GPNGAGKS) provides a ligand contact to ATP.

The protein belongs to the ABC transporter superfamily. Heme (hemin) importer (TC 3.A.1.14.5) family. In terms of assembly, the complex is composed of two ATP-binding proteins (HmuV), two transmembrane proteins (HmuU) and a solute-binding protein (HmuT).

It localises to the cell membrane. Functionally, part of the ABC transporter complex HmuTUV involved in hemin import. Responsible for energy coupling to the transport system. This is Hemin import ATP-binding protein HmuV from Thermobifida fusca (strain YX).